Reading from the N-terminus, the 491-residue chain is Protein nucleotidyltransferase YdiU (491 aa).

Positions 94, 96, 97, 117, 129, 130, 180, and 187 each coordinate ATP. Catalysis depends on aspartate 256, which acts as the Proton acceptor. Residues asparagine 257 and aspartate 266 each contribute to the Mg(2+) site. Aspartate 266 is an ATP binding site.

It belongs to the SELO family. The cofactor is Mg(2+). Mn(2+) is required as a cofactor.

The catalysed reaction is L-seryl-[protein] + ATP = 3-O-(5'-adenylyl)-L-seryl-[protein] + diphosphate. It catalyses the reaction L-threonyl-[protein] + ATP = 3-O-(5'-adenylyl)-L-threonyl-[protein] + diphosphate. The enzyme catalyses L-tyrosyl-[protein] + ATP = O-(5'-adenylyl)-L-tyrosyl-[protein] + diphosphate. It carries out the reaction L-histidyl-[protein] + UTP = N(tele)-(5'-uridylyl)-L-histidyl-[protein] + diphosphate. The catalysed reaction is L-seryl-[protein] + UTP = O-(5'-uridylyl)-L-seryl-[protein] + diphosphate. It catalyses the reaction L-tyrosyl-[protein] + UTP = O-(5'-uridylyl)-L-tyrosyl-[protein] + diphosphate. Functionally, nucleotidyltransferase involved in the post-translational modification of proteins. It can catalyze the addition of adenosine monophosphate (AMP) or uridine monophosphate (UMP) to a protein, resulting in modifications known as AMPylation and UMPylation. In Clostridium botulinum (strain Alaska E43 / Type E3), this protein is Protein nucleotidyltransferase YdiU.